We begin with the raw amino-acid sequence, 384 residues long: S-adenosylmethionine synthase (384 aa).

Histidine 15 provides a ligand contact to ATP. Position 17 (aspartate 17) interacts with Mg(2+). Position 43 (glutamate 43) interacts with K(+). The L-methionine site is built by glutamate 56 and glutamine 99. Positions 99–109 (QSPDINQGVDR) are flexible loop. Residues 164 to 166 (DAK), 230 to 231 (RF), aspartate 239, 245 to 246 (RK), alanine 262, and lysine 266 contribute to the ATP site. Aspartate 239 lines the L-methionine pocket. Residue lysine 270 coordinates L-methionine.

Belongs to the AdoMet synthase family. Homotetramer; dimer of dimers. It depends on Mg(2+) as a cofactor. The cofactor is K(+).

It is found in the cytoplasm. It carries out the reaction L-methionine + ATP + H2O = S-adenosyl-L-methionine + phosphate + diphosphate. The protein operates within amino-acid biosynthesis; S-adenosyl-L-methionine biosynthesis; S-adenosyl-L-methionine from L-methionine: step 1/1. In terms of biological role, catalyzes the formation of S-adenosylmethionine (AdoMet) from methionine and ATP. The overall synthetic reaction is composed of two sequential steps, AdoMet formation and the subsequent tripolyphosphate hydrolysis which occurs prior to release of AdoMet from the enzyme. The protein is S-adenosylmethionine synthase of Enterobacter sp. (strain 638).